The chain runs to 77 residues: Dermaseptin-B9 (77 aa).

An N-terminal signal peptide occupies residues 1-22 (MAFLKKSLFLVLFLGLVSLSVC). Propeptides lie at residues 23–43 (EEEK…QSEE) and 76–77 (EQ).

It belongs to the frog skin active peptide (FSAP) family. Dermaseptin subfamily. As to expression, expressed by the skin glands.

It localises to the secreted. Its function is as follows. Has antimicrobial activity. Exhibits a bactericidal activity towards several species of mollicutes, firmicutes and gracilicutes. This peptide is membranotropic and it efficiently depolarizes the plasma membrane. The sequence is that of Dermaseptin-B9 (DRG3) from Phyllomedusa bicolor (Two-colored leaf frog).